Reading from the N-terminus, the 224-residue chain is Propanediol dehydratase medium subunit (224 aa).

The tract at residues 1 to 18 (MEINEKLLRQIIEDVLRD) is targets protein to the BMC.

Belongs to the diol/glycerol dehydratase medium subunit family. The propanediol dehydratase enzyme is a heterotrimeric complex composed of a large (PduC), a medium (PduD) and a small (PduE) subunit. Adenosylcob(III)alamin serves as cofactor.

The protein resides in the bacterial microcompartment. The catalysed reaction is propane-1,2-diol = propanal + H2O. It participates in polyol metabolism; 1,2-propanediol degradation. Its activity is regulated as follows. Inhibited by glycerol. In terms of biological role, part of the PduCDE complex that catalyzes the dehydration of 1,2-propanediol (1,2-PD) to propionaldehyde. Required for S.typhimurium growth on 1,2-PD as the sole carbon and energy source. This subunit is directly targeted to the bacterial microcompartment (BMC) dedicated to 1,2-PD degradation, and is also responsible for targeting the other 2 subunits (pduC and pduE). Functionally, the 1,2-PD-specific bacterial microcompartment (BMC) concentrates low levels of 1,2-PD catabolic enzymes, concentrates volatile reaction intermediates thus enhancing pathway flux and keeps the level of toxic, mutagenic propionaldehyde low. In Salmonella typhimurium (strain LT2 / SGSC1412 / ATCC 700720), this protein is Propanediol dehydratase medium subunit.